Here is a 594-residue protein sequence, read N- to C-terminus: Estrogen receptor (594 aa).

Residues 1–184 (MTMTLHTKAS…AMESAKETRY (184 aa)) form a modulating (transactivation AF-1); mediates interaction with MACROD1 region. O-linked (GlcNAc) serine glycosylation occurs at S10. The required for interaction with NCOA1 stretch occupies residues 35 to 47 (LERPLGEVYVESS). Residues 35-174 (LERPLGEVYV…LASSGDKGSM (140 aa)) form an interaction with DDX5; self-association region. Phosphoserine; by CDK2 occurs at positions 104 and 106. A Phosphoserine modification is found at S118. Residues 152–173 (PNADNRRQGGRERLASSGDKGS) are disordered. Basic and acidic residues predominate over residues 154-165 (ADNRRQGGRERL). S167 is modified (phosphoserine; by CK2). 2 NR C4-type zinc fingers span residues 185 to 205 (CAVC…CEGC) and 221 to 245 (CPAT…LRKC). A DNA-binding region (nuclear receptor) is located at residues 185-250 (CAVCNDYASG…RLRKCYEVGM (66 aa)). Positions 185 to 310 (CAVCNDYASG…TKKISPVLSL (126 aa)) are mediates interaction with DNTTIP2. Residues 251 to 310 (MKGGIRKDRRGGRMLKHKRQRDDGEGRNEAGPSGDRRPANFWPSPLLIKHTKKISPVLSL) are hinge. The span at 257–269 (KDRRGGRMLKHKR) shows a compositional bias: basic residues. A disordered region spans residues 257–293 (KDRRGGRMLKHKRQRDDGEGRNEAGPSGDRRPANFWP). At R260 the chain carries Asymmetric dimethylarginine; by PRMT1. The tract at residues 262–594 (GRMLKHKRQR…GEAEGFPNTI (333 aa)) is interaction with AKAP13. Positions 264–594 (MLKHKRQRDD…GEAEGFPNTI (331 aa)) are self-association. Residues 270–288 (QRDDGEGRNEAGPSGDRRP) show a composition bias toward basic and acidic residues. In terms of domain architecture, NR LBD spans 311 to 546 (TAEQMISALL…DLLLEMLDAH (236 aa)). The interval 311–594 (TAEQMISALL…GEAEGFPNTI (284 aa)) is transactivation AF-2. The 17beta-estradiol site is built by E353 and R394. A lipid anchor (S-palmitoyl cysteine) is attached at C447. 17beta-estradiol is bound at residue H523. A Phosphotyrosine; by Tyr-kinases modification is found at Y536. A disordered region spans residues 551 to 575 (PANHGGAPMEETNQSQLATTGSTSP). Positions 561 to 575 (ETNQSQLATTGSTSP) are enriched in polar residues. A glycan (O-linked (GlcNAc) threonine) is linked at T570.

The protein belongs to the nuclear hormone receptor family. NR3 subfamily. Binds DNA as a homodimer. Can form a heterodimer with ESR2. Interacts with coactivator NCOA5. Interacts with PELP1, the interaction is enhanced by 17-beta-estradiol; the interaction increases ESR1 transcriptional activity. Interacts with NCOA7; the interaction is ligand-inducible. Interacts with AKAP13, CUEDC2, HEXIM1, KDM5A, MAP1S, SMARD1, and UBE1C. Interacts with MUC1; the interaction is stimulated by 7 beta-estradiol (E2) and enhances ESR1-mediated transcription. Interacts with DNTTIP2, and UIMC1. Interacts with KMT2D/MLL2. Interacts with ATAD2; the interaction is enhanced by estradiol. Interacts with KIF18A and LDB1. Interacts with RLIM (via its C-terminus). Interacts with MACROD1. Interacts with SH2D4A and PLCG. Interacts with SH2D4A; the interaction blocks binding to PLCG and inhibits estrogen-induced cell proliferation. Interacts with DYNLL1. Interacts with CCDC62; the interaction requires estradiol and appears to enhance the transcription of target genes. Interacts with NR2C1; the interaction prevents homodimerization of ESR1 and suppresses its transcriptional activity and cell growth. Interacts with DNAAF4. Interacts with PRMT2. Interacts with RBFOX2. Interacts with EP300; the interaction is estrogen-dependent and enhanced by CITED1. Interacts with CITED1; the interaction is estrogen-dependent. Interacts with FAM120B, FOXL2, PHB2 and SLC30A9. Interacts with coactivators NCOA3 and NCOA6. Interacts with STK3/MST2 only in the presence of SAV1 and vice-versa. Binds to CSNK1D. Interacts with NCOA2; NCOA2 can interact with ESR1 AF-1 and AF-2 domains simultaneously and mediate their transcriptional synergy. Interacts with DDX5. Interacts with NCOA1; the interaction seems to require a self-association of N-terminal and C-terminal regions. Interacts with ZNF366, DDX17, NFKB1, RELA, SP1 and SP3. Interacts with NRIP1. Interacts with GPER1; the interaction occurs in an estrogen-dependent manner. Interacts with CLOCK and the interaction is stimulated by estrogen. Interacts with TRIP4 (ufmylated); estrogen dependent. Interacts with LMTK3; the interaction phosphorylates ESR1 (in vitro) and protects it against proteasomal degradation. Interacts with CCAR2 (via N-terminus) in a ligand-independent manner. Interacts with ZFHX3. Interacts with SFR1 in a ligand-dependent and -independent manner. Interacts with DCAF13, LATS1 and DCAF1; regulates ESR1 ubiquitination and ubiquitin-mediated proteasomal degradation. Interacts (via DNA-binding domain) with POU4F2 (C-terminus); this interaction increases the estrogen receptor ESR1 transcriptional activity in a DNA- and ligand 17-beta-estradiol-independent manner. Interacts with ESRRB isoform 1. Interacts with UBE3A and WBP2. Interacts with GTF2B. Interacts with RBM39. In the absence of hormonal ligand, interacts with TACC1. Interacts with PI3KR1 or PI3KR2 and PTK2/FAK1. Interacts with SRC. Interacts with BAG1; the interaction is promoted in the absence of estradiol (17-beta-estradiol/E2). Interacts with and ubiquitinated by STUB1; the interaction is promoted in the absence of estradiol (17-beta-estradiol/E2). Interacts with NEDD8. In terms of processing, ubiquitinated; regulated by LATS1 via DCAF1 it leads to ESR1 proteasomal degradation. Deubiquitinated by OTUB1. Ubiquitinated by STUB1/CHIP; in the CA1 hippocampal region following loss of endogenous circulating estradiol (17-beta-estradiol/E2). Ubiquitinated by UBR5, leading to its degradation: UBR5 specifically recognizes and binds ligand-bound ESR1 when it is not associated with coactivators (NCOAs). In presence of NCOAs, the UBR5-degron is not accessible, preventing its ubiquitination and degradation. Post-translationally, phosphorylated by cyclin A/CDK2 and CK1. Phosphorylation probably enhances transcriptional activity. Dephosphorylation at Ser-118 by PPP5C inhibits its transactivation activity. Phosphorylated by LMTK3 (in vitro). Palmitoylated at Cys-447 by ZDHHC7 and ZDHHC21. Palmitoylation is required for plasma membrane targeting and for rapid intracellular signaling via ERK and AKT kinases and cAMP generation, but not for signaling mediated by the nuclear hormone receptor. In terms of processing, dimethylated by PRMT1 at Arg-260. The methylation may favor cytoplasmic localization. Demethylated by JMJD6 at Arg-260.

It localises to the nucleus. The protein resides in the cytoplasm. Its subcellular location is the golgi apparatus. The protein localises to the cell membrane. Nuclear hormone receptor. The steroid hormones and their receptors are involved in the regulation of eukaryotic gene expression and affect cellular proliferation and differentiation in target tissues. Ligand-dependent nuclear transactivation involves either direct homodimer binding to a palindromic estrogen response element (ERE) sequence or association with other DNA-binding transcription factors, such as AP-1/c-Jun, c-Fos, ATF-2, Sp1 and Sp3, to mediate ERE-independent signaling. Ligand binding induces a conformational change allowing subsequent or combinatorial association with multiprotein coactivator complexes through LXXLL motifs of their respective components. Mutual transrepression occurs between the estrogen receptor (ER) and NF-kappa-B in a cell-type specific manner. Decreases NF-kappa-B DNA-binding activity and inhibits NF-kappa-B-mediated transcription from the IL6 promoter and displace RELA/p65 and associated coregulators from the promoter. Recruited to the NF-kappa-B response element of the CCL2 and IL8 promoters and can displace CREBBP. Present with NF-kappa-B components RELA/p65 and NFKB1/p50 on ERE sequences. Can also act synergistically with NF-kappa-B to activate transcription involving respective recruitment adjacent response elements; the function involves CREBBP. Can activate the transcriptional activity of TFF1. Also mediates membrane-initiated estrogen signaling involving various kinase cascades. Essential for MTA1-mediated transcriptional regulation of BRCA1 and BCAS3. Maintains neuronal survival in response to ischemic reperfusion injury when in the presence of circulating estradiol (17-beta-estradiol/E2). The chain is Estrogen receptor (ESR1) from Equus caballus (Horse).